An 894-amino-acid polypeptide reads, in one-letter code: Histone-lysine N-methyltransferase EZ2 (894 aa).

A compositionally biased stretch (low complexity) spans 1-11 (MASSSKASDSS). Disordered stretches follow at residues 1 to 25 (MASS…GKDA), 395 to 447 (SSVS…KRQK), and 491 to 513 (KKTS…VGRQ). A compositionally biased stretch (polar residues) spans 395 to 421 (SSVSAEESTTTPSADISETENVSSDLP). A compositionally biased stretch (basic residues) spans 425–435 (LRKHKISKHGP). Over residues 503 to 513 (PATTMENVGRQ) the composition is skewed to polar residues. One can recognise an SANT domain in the interval 527–577 (TLSCWSALERDLYLKGIEIFGKNSCLIARNLLSGLKTCIEVANYMYNNGAA). One can recognise a CXC domain in the interval 627–731 (AGHPTVRKRT…SLGEPLARGD (105 aa)). Residues 746 to 861 (QRILLGRSDV…ASEELFYDYR (116 aa)) enclose the SET domain. The disordered stretch occupies residues 867–894 (APAWARRPEGSKKDEASVSHRRAHKVAR). The span at 872–884 (RRPEGSKKDEASV) shows a compositional bias: basic and acidic residues. Basic residues predominate over residues 885-894 (SHRRAHKVAR).

It belongs to the class V-like SAM-binding methyltransferase superfamily. Histone-lysine methyltransferase family. EZ subfamily.

Its subcellular location is the nucleus. It carries out the reaction L-lysyl(27)-[histone H3] + 3 S-adenosyl-L-methionine = N(6),N(6),N(6)-trimethyl-L-lysyl(27)-[histone H3] + 3 S-adenosyl-L-homocysteine + 3 H(+). Functionally, polycomb group (PcG) protein. Catalytic subunit of some PcG multiprotein complex, which methylates 'Lys-27' of histone H3, leading to transcriptional repression of the affected target genes. PcG proteins are not required to initiate repression, but to maintain it during later stages of development. The polypeptide is Histone-lysine N-methyltransferase EZ2 (EZ2) (Zea mays (Maize)).